The following is a 364-amino-acid chain: Dual-specificity RNA methyltransferase RlmN (364 aa).

Catalysis depends on Glu91, which acts as the Proton acceptor. One can recognise a Radical SAM core domain in the interval Gly102–Asp337. An intrachain disulfide couples Cys109 to Cys342. [4Fe-4S] cluster-binding residues include Cys116, Cys120, and Cys123. S-adenosyl-L-methionine-binding positions include Gly169–Glu170, Ser201, Ser223–His225, and Asn299. Cys342 acts as the S-methylcysteine intermediate in catalysis.

This sequence belongs to the radical SAM superfamily. RlmN family. It depends on [4Fe-4S] cluster as a cofactor.

It localises to the cytoplasm. It catalyses the reaction adenosine(2503) in 23S rRNA + 2 reduced [2Fe-2S]-[ferredoxin] + 2 S-adenosyl-L-methionine = 2-methyladenosine(2503) in 23S rRNA + 5'-deoxyadenosine + L-methionine + 2 oxidized [2Fe-2S]-[ferredoxin] + S-adenosyl-L-homocysteine. The enzyme catalyses adenosine(37) in tRNA + 2 reduced [2Fe-2S]-[ferredoxin] + 2 S-adenosyl-L-methionine = 2-methyladenosine(37) in tRNA + 5'-deoxyadenosine + L-methionine + 2 oxidized [2Fe-2S]-[ferredoxin] + S-adenosyl-L-homocysteine. In terms of biological role, specifically methylates position 2 of adenine 2503 in 23S rRNA and position 2 of adenine 37 in tRNAs. m2A2503 modification seems to play a crucial role in the proofreading step occurring at the peptidyl transferase center and thus would serve to optimize ribosomal fidelity. The polypeptide is Dual-specificity RNA methyltransferase RlmN (Nitratidesulfovibrio vulgaris (strain ATCC 29579 / DSM 644 / CCUG 34227 / NCIMB 8303 / VKM B-1760 / Hildenborough) (Desulfovibrio vulgaris)).